Consider the following 142-residue polypeptide: Nitrogen fixation protein NifU 2 (142 aa).

Residues 1–36 form a disordered region; the sequence is MKDLFDESLTLDTGSAAPGTAPGRPRRRQPAGGKAP. A compositionally biased stretch (low complexity) spans 14 to 23; sequence GSAAPGTAPG.

This sequence belongs to the NifU family.

Functionally, may be involved in the formation or repair of [Fe-S] clusters present in iron-sulfur proteins. In Rhodobacter capsulatus (Rhodopseudomonas capsulata), this protein is Nitrogen fixation protein NifU 2 (nifU2).